Reading from the N-terminus, the 230-residue chain is Demethylmenaquinone methyltransferase (230 aa).

Residues threonine 57, aspartate 77, 101 to 102, and serine 118 each bind S-adenosyl-L-methionine; that span reads DI.

It belongs to the class I-like SAM-binding methyltransferase superfamily. MenG/UbiE family.

It catalyses the reaction a 2-demethylmenaquinol + S-adenosyl-L-methionine = a menaquinol + S-adenosyl-L-homocysteine + H(+). It participates in quinol/quinone metabolism; menaquinone biosynthesis; menaquinol from 1,4-dihydroxy-2-naphthoate: step 2/2. Functionally, methyltransferase required for the conversion of demethylmenaquinol (DMKH2) to menaquinol (MKH2). The polypeptide is Demethylmenaquinone methyltransferase (Chlamydia caviae (strain ATCC VR-813 / DSM 19441 / 03DC25 / GPIC) (Chlamydophila caviae)).